Consider the following 226-residue polypeptide: uncharacterized protein (226 aa).

A helical membrane pass occupies residues 5-25; sequence IKTVSFAAAAILVVIICTFLI.

Its subcellular location is the cell membrane. This is an uncharacterized protein from Bacillus subtilis (strain 168).